A 120-amino-acid polypeptide reads, in one-letter code: Nascent polypeptide-associated complex protein (120 aa).

In terms of domain architecture, NAC-A/B spans G12–I80.

This sequence belongs to the NAC-alpha family. In terms of assembly, homodimer. Interacts with the ribosome. Binds ribosomal RNA.

Functionally, contacts the emerging nascent chain on the ribosome. The protein is Nascent polypeptide-associated complex protein of Methanosarcina mazei (strain ATCC BAA-159 / DSM 3647 / Goe1 / Go1 / JCM 11833 / OCM 88) (Methanosarcina frisia).